Here is a 362-residue protein sequence, read N- to C-terminus: MDLINSLLNFVVPPASLLMLAFTWPTLFFITTCEWLYNTYLNSENMENKVVLITGASSGIGEQIAYQYAKRGANLVLVARREHRLRGISENARRLGAPNVLIMAADVVKEEECRRFINETINYYGRVDHLVNTVSLGHTFYFEEASDSSVFPILMDINFWGNVYPTYVALPYLRESNGRIIVNASVENWLPLPRMSLYSAAKSALINFYETLRFEVKNEVGITVATHGWIGTEMTRGKFMVEEGAEMQWKEEREVHVTGGPVEEFAKQIVSGACRGDPYVKYPSWYDIFFLYRVFAPKVLDWTFRFLLTNGGARRTSFIGTGRPLLETSSPRRSAVMEGSSPRRLPPGPLTFSPAFQQQKSE.

A helical; Signal-anchor for type II membrane protein membrane pass occupies residues 10–30 (FVVPPASLLMLAFTWPTLFFI). The Proline-knob motif lies at 13-26 (PPASLLMLAFTWPT). Position 55-81 (55-81 (GASSGIGEQIAYQYAKRGANLVLVARR)) interacts with NADP(+). Ser-185 contacts substrate. Tyr-198 acts as the Proton acceptor in catalysis. NADP(+)-binding positions include 198–202 (YSAAK) and Lys-202. Positions 321-362 (TGRPLLETSSPRRSAVMEGSSPRRLPPGPLTFSPAFQQQKSE) are disordered.

It belongs to the short-chain dehydrogenases/reductases (SDR) family. As to expression, expressed in seeds (at protein level). Not expressed in stem, leaf or root (at protein level).

Its subcellular location is the lipid droplet. The protein localises to the membrane. The catalysed reaction is an 11beta-hydroxysteroid + NADP(+) = an 11-oxosteroid + NADPH + H(+). It catalyses the reaction corticosterone + NADP(+) = 11-dehydrocorticosterone + NADPH + H(+). It carries out the reaction 17beta-estradiol + NADP(+) = estrone + NADPH + H(+). Has dehydrogenase activity against corticosterone (11 beta-hydroxysteroid) and estradiol (17 beta-hydroxysteroid), with similar activities to both sterols in the presence of NADP(+), but negligible activity to either sterol in the presence of NAD(+). May be involved in signal transduction regulated by various sterols. This chain is 11-beta-hydroxysteroid dehydrogenase B, found in Sesamum indicum (Oriental sesame).